The primary structure comprises 188 residues: Biogenesis of lysosome-related organelles complex 1 subunit 5 (188 aa).

A disordered region spans residues 1 to 24 (MSSSSSSSSPVKSTGSPFIQSLKP). Residues 10–19 (PVKSTGSPFI) show a composition bias toward polar residues. Residues 101-183 (MQDQLASVLK…QYVTMDKELS (83 aa)) are a coiled coil.

This sequence belongs to the BLOC1S5 family. In terms of assembly, component of the biogenesis of lysosome-related organelles complex 1 (BLOC-1).

In terms of biological role, component of the BLOC-1 complex, a complex that is required for normal biogenesis of lysosome-related organelles (LRO), such as platelet dense granules and melanosomes. Plays a role in intracellular vesicle trafficking. This Xenopus laevis (African clawed frog) protein is Biogenesis of lysosome-related organelles complex 1 subunit 5 (bloc1s5).